A 427-amino-acid chain; its full sequence is Heterogeneous nuclear ribonucleoprotein K (427 aa).

Residues Met1–Arg34 are disordered. Over residues Asn16–Arg34 the composition is skewed to basic and acidic residues. KH domains lie at Met39–Ile101 and Asp117–Ile182. Repeat copies occupy residues Ala51–Val73 and Gly56–Gly59. Residues Ala51–Ile385 are 2 X 22 AA approximate repeats. A 5 X 4 AA repeats of G-X-G-G region spans residues Gly56–Gly371. The tract at residues Tyr209–Met246 is RNA-binding RGG-box. A run of 3 repeats spans residues Asp218–Pro223, Gly230–Gly233, and Asn240–Gly243. The 2 X 6 AA approximate repeats stretch occupies residues Asp218 to Pro302. The segment at Gly221 to Arg305 is disordered. Residues Ser249 to Pro258 are compositionally biased toward basic and acidic residues. Repeat copies occupy residues Gly268–Gly271, Asp297–Pro302, Ala363–Ile385, and Gly368–Gly371. The span at Ser295–Arg305 shows a compositional bias: basic and acidic residues. The KH 3 domain occupies Ile351 to Leu415.

It localises to the cytoplasm. The protein resides in the nucleus. Its subcellular location is the nucleoplasm. Functionally, one of the major pre-mRNA-binding proteins. Binds tenaciously to poly(C) sequences. Likely to play a role in the nuclear metabolism of hnRNAs, particularly for pre-mRNAs that contain cytidine-rich sequences. Can also bind poly(C) single-stranded DNA. May play an important role in p53/TP53 response to DNA damage, acting at the level of both transcription activation and repression. As part of a ribonucleoprotein complex, may negatively regulate the transcription of genes involved in neuronal differentiation. This Gallus gallus (Chicken) protein is Heterogeneous nuclear ribonucleoprotein K (HNRNPK).